The primary structure comprises 211 residues: SOSS complex subunit B1 (211 aa).

The OB DNA-binding region spans 22–92 (IVLETGRVTK…TLYTGRGGDL (71 aa)). The tract at residues 110–211 (EPNPEYSAQQ…GKETRRSSKR (102 aa)) is disordered. Residues 115–128 (YSAQQAPNKTVQND) show a composition bias toward polar residues. Pro residues-rich tracts occupy residues 133–143 (APQPPTGPPAT) and 165–174 (PHPPHTPSHP).

The protein belongs to the SOSS-B family. SOSS-B1 subfamily. In terms of assembly, component of the SOSS complex, composed of SOSS-B (SOSS-B1/NABP2 or SOSS-B2/NABP1), SOSS-A/INTS3 and SOSS-C/INIP. SOSS complexes containing SOSS-B1/NABP2 are more abundant than complexes containing SOSS-B2/NABP1. Directly interacts with ATM, SOSS-A/INTS3 and RAD51. Interacts with INTS7. Phosphorylated by ATM in response to DNA damage. Phosphorylation prevents degradation by the proteasome, hence stabilization of the protein and accumulation within cells. Post-translationally, ubiquitinated in a FBXL5-dependent manner, leading to proteasomal degradation.

The protein localises to the nucleus. Its function is as follows. Component of the SOSS complex, a multiprotein complex that functions downstream of the MRN complex to promote DNA repair and G2/M checkpoint. In the SOSS complex, acts as a sensor of single-stranded DNA that binds to single-stranded DNA, in particular to polypyrimidines. The SOSS complex associates with DNA lesions and influences diverse endpoints in the cellular DNA damage response including cell-cycle checkpoint activation, recombinational repair and maintenance of genomic stability. Required for efficient homologous recombination-dependent repair of double-strand breaks (DSBs) and ATM-dependent signaling pathways. This is SOSS complex subunit B1 (NABP2) from Bos taurus (Bovine).